Here is a 369-residue protein sequence, read N- to C-terminus: Peptide chain release factor 2 (369 aa).

Position 250 is an N5-methylglutamine (Gln250).

The protein belongs to the prokaryotic/mitochondrial release factor family. Post-translationally, methylated by PrmC. Methylation increases the termination efficiency of RF2.

It localises to the cytoplasm. Its function is as follows. Peptide chain release factor 2 directs the termination of translation in response to the peptide chain termination codons UGA and UAA. This chain is Peptide chain release factor 2 (prfB), found in Rickettsia typhi (strain ATCC VR-144 / Wilmington).